A 134-amino-acid chain; its full sequence is Large ribosomal subunit protein eL27 (134 aa).

Residues 5–40 (LKSGKVVVVLSGRFAGKKAVIVRNFDDGTSSRPYGH) enclose the KOW domain.

This sequence belongs to the eukaryotic ribosomal protein eL27 family.

The protein is Large ribosomal subunit protein eL27 (RPL27) of Pyrobotrys stellatus (Green alga).